Consider the following 438-residue polypeptide: DNA primase small subunit (438 aa).

Residues Glu-63, Asp-127, and Asp-129 contribute to the active site. A Zinc knuckle motif motif is present at residues 139 to 149; sequence CCSGAGVCLKC.

The protein belongs to the eukaryotic-type primase small subunit family. In terms of assembly, heterodimer of a catalytic subunit Prim1 and a regulatory subunit Prim2, also known as the DNA primase complex. Component of the alpha DNA polymerase complex (also known as the alpha DNA polymerase-primase complex) consisting of four subunits: the catalytic subunit PolA1, the regulatory subunit PolA2, and the primase complex subunits Prim1 and Prim2 respectively. PolA1 associates with the DNA primase complex before association with PolA2. Mg(2+) is required as a cofactor. Mn(2+) serves as cofactor. Expressed in embryos (at protein level).

Its activity is regulated as follows. The presence of the regulatory subunit Prim2 accelerates the kinetics of initiation and primer extension. In terms of biological role, catalytic subunit of the DNA primase complex and component of the DNA polymerase alpha complex (also known as the alpha DNA polymerase-primase complex) which play an essential role in the initiation of DNA synthesis. During the S phase of the cell cycle, the DNA polymerase alpha complex (composed of a catalytic subunit PolA1, an accessory subunit PolA2 and two primase subunits, the catalytic subunit Prim1 and the regulatory subunit Prim2) is recruited to DNA at the replicative forks. The primase subunit of the polymerase alpha complex initiates DNA synthesis by oligomerising short RNA primers on both leading and lagging strands. These primers are initially extended by the polymerase alpha catalytic subunit and subsequently transferred to polymerase delta and polymerase epsilon for processive synthesis on the lagging and leading strand, respectively. In the primase complex, both subunits are necessary for the initial di-nucleotide formation, but the extension of the primer depends only on the catalytic subunit. Can add both ribo- and deoxynucleotides during elongation of the primers. Binds single stranded DNA. This is DNA primase small subunit from Drosophila melanogaster (Fruit fly).